Consider the following 247-residue polypeptide: Probable transcriptional regulatory protein Tola_2714 (247 aa).

A disordered region spans residues 1 to 21 (MAGHSKWANIKHRKAAQDAKR).

This sequence belongs to the TACO1 family.

The protein localises to the cytoplasm. This is Probable transcriptional regulatory protein Tola_2714 from Tolumonas auensis (strain DSM 9187 / NBRC 110442 / TA 4).